Consider the following 167-residue polypeptide: Large ribosomal subunit protein uL23 (167 aa).

Residues 1–118 (MNVNEIIKGP…TEEKAKIAKK (118 aa)) are large ribosomal subunit protein uL23. Disordered regions lie at residues 91 to 112 (FEDESPQDQKDSETVSENTEEK) and 136 to 167 (KQAELAKKDSETNENQEKRIENQTENQENSAN). Basic and acidic residues-rich tracts occupy residues 97 to 112 (QDQKDSETVSENTEEK) and 136 to 157 (KQAELAKKDSETNENQEKRIEN). The interval 119–167 (KAELEAKNKEIAEKLAKKQAELAKKDSETNENQEKRIENQTENQENSAN) is unknown. The span at 158–167 (QTENQENSAN) shows a compositional bias: polar residues.

Belongs to the universal ribosomal protein uL23 family. In terms of assembly, part of the 50S ribosomal subunit. Contacts protein L29, and trigger factor when it is bound to the ribosome.

In terms of biological role, one of the early assembly proteins it binds 23S rRNA. One of the proteins that surrounds the polypeptide exit tunnel on the outside of the ribosome. Forms the main docking site for trigger factor binding to the ribosome. This Mesomycoplasma hyopneumoniae (strain J / ATCC 25934 / NCTC 10110) (Mycoplasma hyopneumoniae) protein is Large ribosomal subunit protein uL23.